The following is a 325-amino-acid chain: Elongation factor P--(R)-beta-lysine ligase (325 aa).

76-78 (SPE) is a substrate binding site. ATP is bound by residues 100–102 (RNE) and Asn109. Tyr118 contributes to the substrate binding site. 244–245 (EL) contributes to the ATP binding site. Glu251 is a substrate binding site. Residue Gly300 coordinates ATP.

It belongs to the class-II aminoacyl-tRNA synthetase family. EpmA subfamily. In terms of assembly, homodimer.

It carries out the reaction D-beta-lysine + L-lysyl-[protein] + ATP = N(6)-((3R)-3,6-diaminohexanoyl)-L-lysyl-[protein] + AMP + diphosphate + H(+). Functionally, with EpmB is involved in the beta-lysylation step of the post-translational modification of translation elongation factor P (EF-P). Catalyzes the ATP-dependent activation of (R)-beta-lysine produced by EpmB, forming a lysyl-adenylate, from which the beta-lysyl moiety is then transferred to the epsilon-amino group of a conserved specific lysine residue in EF-P. This Erwinia tasmaniensis (strain DSM 17950 / CFBP 7177 / CIP 109463 / NCPPB 4357 / Et1/99) protein is Elongation factor P--(R)-beta-lysine ligase.